A 469-amino-acid chain; its full sequence is Glutamate--tRNA ligase (469 aa).

The short motif at 9 to 19 (PSPTGFLHVGG) is the 'HIGH' region element. Cysteine 98, cysteine 100, cysteine 125, and aspartate 127 together coordinate Zn(2+). The 'KMSKS' region motif lies at 236–240 (KLSKR). Residue lysine 239 coordinates ATP.

Belongs to the class-I aminoacyl-tRNA synthetase family. Glutamate--tRNA ligase type 1 subfamily. As to quaternary structure, monomer. The cofactor is Zn(2+).

The protein resides in the cytoplasm. The enzyme catalyses tRNA(Glu) + L-glutamate + ATP = L-glutamyl-tRNA(Glu) + AMP + diphosphate. In terms of biological role, catalyzes the attachment of glutamate to tRNA(Glu) in a two-step reaction: glutamate is first activated by ATP to form Glu-AMP and then transferred to the acceptor end of tRNA(Glu). The polypeptide is Glutamate--tRNA ligase (Shewanella baltica (strain OS185)).